We begin with the raw amino-acid sequence, 395 residues long: Chalcone synthase (395 aa).

Cys-169 is a catalytic residue.

Belongs to the thiolase-like superfamily. Chalcone/stilbene synthases family.

The catalysed reaction is (E)-4-coumaroyl-CoA + 3 malonyl-CoA + 3 H(+) = 2',4,4',6'-tetrahydroxychalcone + 3 CO2 + 4 CoA. It participates in secondary metabolite biosynthesis; flavonoid biosynthesis. The primary product of this enzyme is 4,2',4',6'-tetrahydroxychalcone (also termed naringenin-chalcone or chalcone) which can under specific conditions spontaneously isomerize into naringenin. In Pinus strobus (Eastern white pine), this protein is Chalcone synthase (CHS).